Here is a 461-residue protein sequence, read N- to C-terminus: UPF0210 protein LCABL_10110 (461 aa).

Belongs to the UPF0210 family. Homodimer.

The sequence is that of UPF0210 protein LCABL_10110 from Lacticaseibacillus casei (strain BL23) (Lactobacillus casei).